A 46-amino-acid chain; its full sequence is Viscotoxin-C1 (46 aa).

3 cysteine pairs are disulfide-bonded: Cys-3-Cys-40, Cys-4-Cys-32, and Cys-16-Cys-26.

In terms of assembly, monomer.

Its subcellular location is the secreted. In terms of biological role, thionins are small plant proteins which are toxic to animal cells. They seem to exert their toxic effect at the level of the cell membrane. Their precise function is not known. In Viscum album (European mistletoe), this protein is Viscotoxin-C1.